The primary structure comprises 699 residues: Polyribonucleotide nucleotidyltransferase (699 aa).

Residues Asp-485 and Asp-491 each coordinate Mg(2+). The 60-residue stretch at Pro-552 to Ile-611 folds into the KH domain. The S1 motif domain occupies Gly-621 to Lys-689.

It belongs to the polyribonucleotide nucleotidyltransferase family. In terms of assembly, component of the RNA degradosome, which is a multiprotein complex involved in RNA processing and mRNA degradation. Requires Mg(2+) as cofactor.

The protein localises to the cytoplasm. It carries out the reaction RNA(n+1) + phosphate = RNA(n) + a ribonucleoside 5'-diphosphate. Functionally, involved in mRNA degradation. Catalyzes the phosphorolysis of single-stranded polyribonucleotides processively in the 3'- to 5'-direction. This Shewanella amazonensis (strain ATCC BAA-1098 / SB2B) protein is Polyribonucleotide nucleotidyltransferase.